We begin with the raw amino-acid sequence, 201 residues long: Dephospho-CoA kinase (201 aa).

Residues 4 to 201 enclose the DPCK domain; it reads SVGLTGNIAS…KYLREAKIKQ (198 aa). 12-17 is a binding site for ATP; it reads ASGKST.

The protein belongs to the CoaE family.

The protein localises to the cytoplasm. It catalyses the reaction 3'-dephospho-CoA + ATP = ADP + CoA + H(+). It participates in cofactor biosynthesis; coenzyme A biosynthesis; CoA from (R)-pantothenate: step 5/5. Catalyzes the phosphorylation of the 3'-hydroxyl group of dephosphocoenzyme A to form coenzyme A. The sequence is that of Dephospho-CoA kinase from Legionella pneumophila (strain Lens).